A 635-amino-acid chain; its full sequence is Threonine--tRNA ligase (635 aa).

Positions 1 to 61 (MINISFPDGS…DNDCRLRILT (61 aa)) constitute a TGS domain. The tract at residues 242-533 (DHRKLGKELD…LIEEYAGRFP (292 aa)) is catalytic. Positions 333, 384, and 510 each coordinate Zn(2+).

The protein belongs to the class-II aminoacyl-tRNA synthetase family. In terms of assembly, homodimer. Requires Zn(2+) as cofactor.

Its subcellular location is the cytoplasm. The catalysed reaction is tRNA(Thr) + L-threonine + ATP = L-threonyl-tRNA(Thr) + AMP + diphosphate + H(+). In terms of biological role, catalyzes the attachment of threonine to tRNA(Thr) in a two-step reaction: L-threonine is first activated by ATP to form Thr-AMP and then transferred to the acceptor end of tRNA(Thr). Also edits incorrectly charged L-seryl-tRNA(Thr). This is Threonine--tRNA ligase from Rickettsia bellii (strain RML369-C).